Here is a 451-residue protein sequence, read N- to C-terminus: Adenylyltransferase and sulfurtransferase MOCS3-2 (451 aa).

The disordered stretch occupies residues 42-62; sequence GEDSDEAEESSNDMPTPQTKL. Positions 43-52 are enriched in acidic residues; sequence EDSDEAEESS. A Phosphothreonine modification is found at Thr-60. ATP contacts are provided by residues Gly-99, Asp-120, 127 to 131, Lys-144, and 188 to 189; these read SNLHR and DN. Zn(2+) is bound by residues Cys-229 and Cys-232. Residue Cys-246 is the Glycyl thioester intermediate; for adenylyltransferase activity of the active site. Residues Cys-304 and Cys-307 each contribute to the Zn(2+) site. Positions 353-449 constitute a Rhodanese domain; sequence QSQPHLLLDV…WTGSVDATFP (97 aa). The active-site Cysteine persulfide intermediate; for sulfurtransferase activity is Cys-408.

This sequence in the N-terminal section; belongs to the HesA/MoeB/ThiF family. UBA4 subfamily. Requires Zn(2+) as cofactor.

The protein resides in the cytoplasm. The enzyme catalyses [molybdopterin-synthase sulfur-carrier protein]-C-terminal Gly-Gly + ATP + H(+) = [molybdopterin-synthase sulfur-carrier protein]-C-terminal Gly-Gly-AMP + diphosphate. It carries out the reaction [molybdopterin-synthase sulfur-carrier protein]-C-terminal Gly-Gly-AMP + S-sulfanyl-L-cysteinyl-[cysteine desulfurase] + AH2 = [molybdopterin-synthase sulfur-carrier protein]-C-terminal-Gly-aminoethanethioate + L-cysteinyl-[cysteine desulfurase] + A + AMP + 2 H(+). Its pathway is tRNA modification; 5-methoxycarbonylmethyl-2-thiouridine-tRNA biosynthesis. It participates in cofactor biosynthesis; molybdopterin biosynthesis. In terms of biological role, plays a central role in 2-thiolation of mcm(5)S(2)U at tRNA wobble positions of cytosolic tRNA(Lys), tRNA(Glu) and tRNA(Gln). Also essential during biosynthesis of the molybdenum cofactor. Acts by mediating the C-terminal thiocarboxylation of sulfur carriers URM1 and MOCS2A. Its N-terminus first activates URM1 and MOCS2A as acyl-adenylates (-COAMP), then the persulfide sulfur on the catalytic cysteine is transferred to URM1 and MOCS2A to form thiocarboxylation (-COSH) of their C-terminus. The reaction probably involves hydrogen sulfide that is generated from the persulfide intermediate and that acts as a nucleophile towards URM1 and MOCS2A. Subsequently, a transient disulfide bond is formed. Does not use thiosulfate as sulfur donor; NFS1 probably acting as a sulfur donor for thiocarboxylation reactions. The chain is Adenylyltransferase and sulfurtransferase MOCS3-2 from Drosophila pseudoobscura pseudoobscura (Fruit fly).